A 372-amino-acid polypeptide reads, in one-letter code: Chaperone protein DnaJ (372 aa).

One can recognise a J domain in the interval 5-69 (DYYEVLGVDR…QKKARYDQFG (65 aa)). The CR-type zinc-finger motif lies at 129–211 (GKETEIEIPR…CSGKGKVRKR (83 aa)). Cys-142, Cys-145, Cys-159, Cys-162, Cys-185, Cys-188, Cys-199, and Cys-202 together coordinate Zn(2+). CXXCXGXG motif repeat units follow at residues 142 to 149 (CGTCHGSG), 159 to 166 (CSHCGGSG), 185 to 192 (CNYCEGTG), and 199 to 206 (CATCSGKG).

This sequence belongs to the DnaJ family. In terms of assembly, homodimer. Zn(2+) is required as a cofactor.

It localises to the cytoplasm. Participates actively in the response to hyperosmotic and heat shock by preventing the aggregation of stress-denatured proteins and by disaggregating proteins, also in an autonomous, DnaK-independent fashion. Unfolded proteins bind initially to DnaJ; upon interaction with the DnaJ-bound protein, DnaK hydrolyzes its bound ATP, resulting in the formation of a stable complex. GrpE releases ADP from DnaK; ATP binding to DnaK triggers the release of the substrate protein, thus completing the reaction cycle. Several rounds of ATP-dependent interactions between DnaJ, DnaK and GrpE are required for fully efficient folding. Also involved, together with DnaK and GrpE, in the DNA replication of plasmids through activation of initiation proteins. The polypeptide is Chaperone protein DnaJ (Shouchella clausii (strain KSM-K16) (Alkalihalobacillus clausii)).